Here is a 716-residue protein sequence, read N- to C-terminus: Phosphoribosylformylglycinamidine synthase subunit PurL (716 aa).

Histidine 33 is an active-site residue. Residue tyrosine 36 participates in ATP binding. Position 77 (glutamate 77) interacts with Mg(2+). Substrate is bound by residues 78–81 and arginine 100; that span reads SHNH. Histidine 79 serves as the catalytic Proton acceptor. Aspartate 101 lines the Mg(2+) pocket. Substrate is bound at residue glutamine 225. Residue aspartate 253 coordinates Mg(2+). Position 297 to 299 (297 to 299) interacts with substrate; that stretch reads ESQ. Residues asparagine 475 and glycine 512 each contribute to the ATP site. Asparagine 513 contacts Mg(2+). Serine 515 lines the substrate pocket.

This sequence belongs to the FGAMS family. In terms of assembly, monomer. Part of the FGAM synthase complex composed of 1 PurL, 1 PurQ and 2 PurS subunits.

The protein resides in the cytoplasm. The catalysed reaction is N(2)-formyl-N(1)-(5-phospho-beta-D-ribosyl)glycinamide + L-glutamine + ATP + H2O = 2-formamido-N(1)-(5-O-phospho-beta-D-ribosyl)acetamidine + L-glutamate + ADP + phosphate + H(+). It participates in purine metabolism; IMP biosynthesis via de novo pathway; 5-amino-1-(5-phospho-D-ribosyl)imidazole from N(2)-formyl-N(1)-(5-phospho-D-ribosyl)glycinamide: step 1/2. Its function is as follows. Part of the phosphoribosylformylglycinamidine synthase complex involved in the purines biosynthetic pathway. Catalyzes the ATP-dependent conversion of formylglycinamide ribonucleotide (FGAR) and glutamine to yield formylglycinamidine ribonucleotide (FGAM) and glutamate. The FGAM synthase complex is composed of three subunits. PurQ produces an ammonia molecule by converting glutamine to glutamate. PurL transfers the ammonia molecule to FGAR to form FGAM in an ATP-dependent manner. PurS interacts with PurQ and PurL and is thought to assist in the transfer of the ammonia molecule from PurQ to PurL. This Methanosarcina mazei (strain ATCC BAA-159 / DSM 3647 / Goe1 / Go1 / JCM 11833 / OCM 88) (Methanosarcina frisia) protein is Phosphoribosylformylglycinamidine synthase subunit PurL.